A 1381-amino-acid chain; its full sequence is DNA-directed RNA polymerase subunit beta'' (1381 aa).

Positions 224, 295, 302, and 305 each coordinate Zn(2+).

Belongs to the RNA polymerase beta' chain family. RpoC2 subfamily. In plastids the minimal PEP RNA polymerase catalytic core is composed of four subunits: alpha, beta, beta', and beta''. When a (nuclear-encoded) sigma factor is associated with the core the holoenzyme is formed, which can initiate transcription. It depends on Zn(2+) as a cofactor.

It localises to the plastid. The protein localises to the chloroplast. The catalysed reaction is RNA(n) + a ribonucleoside 5'-triphosphate = RNA(n+1) + diphosphate. In terms of biological role, DNA-dependent RNA polymerase catalyzes the transcription of DNA into RNA using the four ribonucleoside triphosphates as substrates. This Lactuca sativa (Garden lettuce) protein is DNA-directed RNA polymerase subunit beta''.